Reading from the N-terminus, the 280-residue chain is Diaminopimelate epimerase (280 aa).

Residues Asn-12, Gln-45, and Asn-65 each contribute to the substrate site. Cys-74 serves as the catalytic Proton donor. Substrate is bound by residues 75–76, Asn-163, Asn-196, and 214–215; these read GN and ER. The Proton acceptor role is filled by Cys-223. 224-225 lines the substrate pocket; that stretch reads GT.

The protein belongs to the diaminopimelate epimerase family. As to quaternary structure, homodimer.

It is found in the cytoplasm. The catalysed reaction is (2S,6S)-2,6-diaminopimelate = meso-2,6-diaminopimelate. It functions in the pathway amino-acid biosynthesis; L-lysine biosynthesis via DAP pathway; DL-2,6-diaminopimelate from LL-2,6-diaminopimelate: step 1/1. Catalyzes the stereoinversion of LL-2,6-diaminopimelate (L,L-DAP) to meso-diaminopimelate (meso-DAP), a precursor of L-lysine and an essential component of the bacterial peptidoglycan. The chain is Diaminopimelate epimerase from Shewanella sediminis (strain HAW-EB3).